Consider the following 558-residue polypeptide: Protein OS-9 homolog (558 aa).

Residues 1 to 17 (MLLKSLALIASSSLAAT) form the signal peptide. An N-linked (GlcNAc...) asparagine glycan is attached at asparagine 68. An MRH domain is found at 111 to 237 (GDCLFYEQGF…QVGTPRLCKD (127 aa)). An intrachain disulfide couples cysteine 113 to cysteine 126. The a mannooligosaccharide derivative site is built by glutamine 133, arginine 197, glutamate 219, and tyrosine 225. 2 cysteine pairs are disulfide-bonded: cysteine 190–cysteine 223 and cysteine 205–cysteine 235. Disordered regions lie at residues 435–508 (SKKL…DEDE) and 539–558 (KDLADKEDDDDDYEDYGLSD). Positions 441 to 466 (KKEAASTKREEAKKQVEASVEEKAVD) are enriched in basic and acidic residues. The span at 474–492 (DTVTSTQTFFRTQTLSTAE) shows a compositional bias: polar residues. Residues 543–558 (DKEDDDDDYEDYGLSD) show a composition bias toward acidic residues.

The protein belongs to the OS-9 family. As to quaternary structure, interacts with missfolded ER lumenal proteins.

The protein resides in the endoplasmic reticulum membrane. In terms of biological role, lectin involved in the quality control of the secretory pathway. As a member of the endoplasmic reticulum-associated degradation lumenal (ERAD-L) surveillance system, targets misfolded endoplasmic reticulum lumenal glycoproteins for degradation. The sequence is that of Protein OS-9 homolog (YOS9) from Yarrowia lipolytica (strain CLIB 122 / E 150) (Yeast).